An 891-amino-acid polypeptide reads, in one-letter code: uncharacterized protein (891 aa).

The span at 48–64 (GHKKPRSESRKKYDAKK) shows a compositional bias: basic and acidic residues. A disordered region spans residues 48 to 86 (GHKKPRSESRKKYDAKKQHQSSHFATPVKGVESSEPTEK). Phosphoserine is present on residues Ser261, Ser263, Ser265, and Ser268. Residues 795 to 822 (QRTFSNESPRAVDSGFSRTSTPFSESTS) are disordered. The segment covering 810 to 822 (FSRTSTPFSESTS) has biased composition (polar residues).

The protein resides in the nucleus. This is an uncharacterized protein from Schizosaccharomyces pombe (strain 972 / ATCC 24843) (Fission yeast).